Consider the following 155-residue polypeptide: Small ribosomal subunit protein uS7c (155 aa).

Belongs to the universal ribosomal protein uS7 family. As to quaternary structure, part of the 30S ribosomal subunit.

The protein resides in the plastid. It localises to the chloroplast. Its function is as follows. One of the primary rRNA binding proteins, it binds directly to 16S rRNA where it nucleates assembly of the head domain of the 30S subunit. This Spathiphyllum wallisii (Peace lily) protein is Small ribosomal subunit protein uS7c (rps7).